The chain runs to 201 residues: MELTLKDAQSALEVSEATFGREFNEALVHQVVVAYGAGARQGTKAQKTRAEVRGGGKKPWRQKGTGRARAGTIRSPIWVGGGRAFAAKPRDFDQKVNKKMYRGAIKSILSELIRQDRLVVVEKFGVDAPKTKALISALNEYELNDVLIVTPEVDENLFLAARNLYKVDVRDVAGIDPVSLIAFEKVLMTADAVKQLEEALA.

A disordered region spans residues 44-66 (KAQKTRAEVRGGGKKPWRQKGTG). Over residues 55 to 66 (GGKKPWRQKGTG) the composition is skewed to basic residues.

It belongs to the universal ribosomal protein uL4 family. In terms of assembly, part of the 50S ribosomal subunit.

Its function is as follows. One of the primary rRNA binding proteins, this protein initially binds near the 5'-end of the 23S rRNA. It is important during the early stages of 50S assembly. It makes multiple contacts with different domains of the 23S rRNA in the assembled 50S subunit and ribosome. Forms part of the polypeptide exit tunnel. This chain is Large ribosomal subunit protein uL4, found in Alteromonas mediterranea (strain DSM 17117 / CIP 110805 / LMG 28347 / Deep ecotype).